A 411-amino-acid polypeptide reads, in one-letter code: LL-diaminopimelate aminotransferase (411 aa).

Substrate contacts are provided by Tyr-15 and Gly-42. Pyridoxal 5'-phosphate-binding positions include Tyr-72, 108-109 (SK), Tyr-132, Asn-187, Tyr-218, and 246-248 (SFS). 3 residues coordinate substrate: Lys-109, Tyr-132, and Asn-187. Lys-249 bears the N6-(pyridoxal phosphate)lysine mark. 2 residues coordinate pyridoxal 5'-phosphate: Arg-257 and Asn-292. 2 residues coordinate substrate: Asn-292 and Arg-388.

This sequence belongs to the class-I pyridoxal-phosphate-dependent aminotransferase family. LL-diaminopimelate aminotransferase subfamily. Homodimer. It depends on pyridoxal 5'-phosphate as a cofactor.

It carries out the reaction (2S,6S)-2,6-diaminopimelate + 2-oxoglutarate = (S)-2,3,4,5-tetrahydrodipicolinate + L-glutamate + H2O + H(+). It participates in amino-acid biosynthesis; L-lysine biosynthesis via DAP pathway; LL-2,6-diaminopimelate from (S)-tetrahydrodipicolinate (aminotransferase route): step 1/1. Functionally, involved in the synthesis of meso-diaminopimelate (m-DAP or DL-DAP), required for both lysine and peptidoglycan biosynthesis. Catalyzes the direct conversion of tetrahydrodipicolinate to LL-diaminopimelate. This chain is LL-diaminopimelate aminotransferase, found in Synechococcus elongatus (strain ATCC 33912 / PCC 7942 / FACHB-805) (Anacystis nidulans R2).